Here is a 1253-residue protein sequence, read N- to C-terminus: Methionine synthase (1253 aa).

In terms of domain architecture, Hcy-binding spans 6-326 (QDEIEAILRK…DHIREIAEAV (321 aa)). Positions 248, 311, and 312 each coordinate Zn(2+). The 262-residue stretch at 359-620 (FVNIGERCNV…IHKDLLQLCE (262 aa)) folds into the Pterin-binding domain. (6S)-5,6,7,8-tetrahydrofolate is bound by residues 370–372 (GSR), aspartate 437, asparagine 458, aspartate 525, asparagine 567, arginine 573, and arginine 579. Positions 650–747 (QTDEWRNGSI…FMEKEREEAR (98 aa)) constitute a B12-binding N-terminal domain. Residues glutamate 697, 770-774 (GDVHD), histidine 773, serine 818, threonine 822, and alanine 874 each bind methylcob(III)alamin. Residues 760–895 (QGTIVLATVK…DENLRDDYFE (136 aa)) enclose the B12-binding domain. The AdoMet activation domain occupies 911–1253 (SLKERKYVPL…LGPILGYDTD (343 aa)). S-adenosyl-L-methionine-binding positions include aspartate 962, arginine 1160, and 1215-1216 (YF). Threonine 1252 is subject to Phosphothreonine.

This sequence belongs to the vitamin-B12 dependent methionine synthase family. Monomer. Dimer. Forms a multiprotein complex with MMACHC, MMADHC and MTRR. Requires methylcob(III)alamin as cofactor. The cofactor is Zn(2+).

Its subcellular location is the cytoplasm. The catalysed reaction is (6S)-5-methyl-5,6,7,8-tetrahydrofolate + L-homocysteine = (6S)-5,6,7,8-tetrahydrofolate + L-methionine. The protein operates within amino-acid biosynthesis; L-methionine biosynthesis via de novo pathway; L-methionine from L-homocysteine (MetH route): step 1/1. Its function is as follows. Catalyzes the transfer of a methyl group from methylcob(III)alamin (MeCbl) to homocysteine, yielding enzyme-bound cob(I)alamin and methionine in the cytosol. MeCbl is an active form of cobalamin (vitamin B12) used as a cofactor for methionine biosynthesis. Cob(I)alamin form is regenerated to MeCbl by a transfer of a methyl group from 5-methyltetrahydrofolate. The processing of cobalamin in the cytosol occurs in a multiprotein complex composed of at least MMACHC, MMADHC, MTRR (methionine synthase reductase) and MTR which may contribute to shuttle safely and efficiently cobalamin towards MTR in order to produce methionine. The polypeptide is Methionine synthase (Mus musculus (Mouse)).